Reading from the N-terminus, the 365-residue chain is Ribosomal RNA large subunit methyltransferase F (365 aa).

Positions 1–49 (MSKPAVKSVQSATAKTATRAVNIRQKVKAPKQAKPEAKGRVRPSKDKPR) are disordered. Basic and acidic residues predominate over residues 33–49 (AKPEAKGRVRPSKDKPR).

This sequence belongs to the methyltransferase superfamily. METTL16/RlmF family.

The protein resides in the cytoplasm. The enzyme catalyses adenosine(1618) in 23S rRNA + S-adenosyl-L-methionine = N(6)-methyladenosine(1618) in 23S rRNA + S-adenosyl-L-homocysteine + H(+). In terms of biological role, specifically methylates the adenine in position 1618 of 23S rRNA. The polypeptide is Ribosomal RNA large subunit methyltransferase F (Shewanella baltica (strain OS185)).